The sequence spans 791 residues: RAS guanyl-releasing protein 1 (791 aa).

One can recognise an N-terminal Ras-GEF domain in the interval 49–172 (LGKLSKGASL…RLIDTAQINS (124 aa)). A ras exchanger motif region; required for transforming activity region spans residues 53 to 106 (SKGASLDDLIQMCIQAFDLDGNMGQNSELLQIMLTMHGFLLPSTELLMKLRTLY). One can recognise a Ras-GEF domain in the interval 201–432 (EPQELAEHLT…YELSYAREPR (232 aa)). EF-hand domains are found at residues 466–501 (HVQR…FPFS) and 502–528 (FCVM…ASSI). 9 residues coordinate Ca(2+): Asp479, Asp481, Asp483, Tyr485, Glu490, Asp506, Asp508, Glu510, and Glu517. A Phorbol-ester/DAG-type zinc finger spans residues 537–587 (LHNFQETTYLRPTFCDNCAGFLWGVIKQGYRCKDCGMNCHKQCKELVVFEC). Over residues 683 to 695 (QVPSPQRSRTPGL) the composition is skewed to polar residues. The interval 683–715 (QVPSPQRSRTPGLTSHLPISPMPSPCPSPVPTR) is disordered. Residues 702 to 712 (SPMPSPCPSPV) show a composition bias toward pro residues. Residues 728-785 (IRKARAELRGGKAGIQELEKEKALLKEENTTLKIQLKDAQRRVETLRAELRKYVLDSD) adopt a coiled-coil conformation.

Belongs to the RASGRP family.

Its subcellular location is the cytoplasm. The protein localises to the cytosol. It localises to the cell membrane. It is found in the golgi apparatus membrane. The protein resides in the endoplasmic reticulum membrane. Its activity is regulated as follows. Regulated by F-actin polymerization and probably by calcium. Functions as a diacylglycerol (DAG)-regulated nucleotide exchange factor specifically activating Ras through the exchange of bound GDP for GTP. The sequence is that of RAS guanyl-releasing protein 1 (rasgrp1) from Xenopus tropicalis (Western clawed frog).